The following is a 220-amino-acid chain: Coat protein TP4 (220 aa).

The protein resides in the virion. The chain is Coat protein TP4 from Thermoproteus tenax (TTV1).